Here is a 273-residue protein sequence, read N- to C-terminus: Peptide deformylase 1B, chloroplastic/mitochondrial (273 aa).

The transit peptide at 1–56 directs the protein to the chloroplast and mitochondrion; that stretch reads MAVCNCFLQAPPLSRILLPVLSRRATTLSAGYGRLKSTVTFCSTVNRTSPLTSSVR. Positions 171 and 213 each coordinate Fe cation. Glu-214 is an active-site residue. His-217 provides a ligand contact to Fe cation. Residues 246–261 are compositionally biased toward basic and acidic residues; the sequence is YEEKTGLPSPERVEAR. The disordered stretch occupies residues 246-273; that stretch reads YEEKTGLPSPERVEARQKRKAGVGFGKR. Positions 262 to 273 are enriched in basic residues; sequence QKRKAGVGFGKR.

Belongs to the polypeptide deformylase family. As to quaternary structure, homodimer. Fe(2+) is required as a cofactor. As to expression, expressed in leaves and flowers.

The protein resides in the plastid. It is found in the chloroplast stroma. Its subcellular location is the mitochondrion. The enzyme catalyses N-terminal N-formyl-L-methionyl-[peptide] + H2O = N-terminal L-methionyl-[peptide] + formate. With respect to regulation, inhibited by actinonin. In terms of biological role, removes the formyl group from the N-terminal Met of newly synthesized proteins. Has a preferred substrate specificity towards the photosystem II (PS II) D1 polypeptide. In Arabidopsis thaliana (Mouse-ear cress), this protein is Peptide deformylase 1B, chloroplastic/mitochondrial (PDF1B).